The sequence spans 192 residues: Ion-translocating oxidoreductase complex subunit A (192 aa).

A run of 6 helical transmembrane segments spans residues 5–25 (LLLLISTVLVNNFVLVKFLGL), 39–59 (IGMSMATTFVLTLASILSYLV), 65–85 (LPFDLSYLRTMSFILVIAVVV), 102–122 (ALGIYLPLITTNCAVLGVALL), 134–154 (AIFGFGAALGFSLVLILFSAM), and 171–191 (AIAMITAGLMSLAFMGFTGLV).

This sequence belongs to the NqrDE/RnfAE family. In terms of assembly, the complex is composed of six subunits: RnfA, RnfB, RnfC, RnfD, RnfE and RnfG.

Its subcellular location is the cell inner membrane. Part of a membrane-bound complex that couples electron transfer with translocation of ions across the membrane. In Shewanella baltica (strain OS223), this protein is Ion-translocating oxidoreductase complex subunit A.